We begin with the raw amino-acid sequence, 162 residues long: Lipoprotein signal peptidase (162 aa).

3 helical membrane-spanning segments follow: residues 12–32 (WLWL…LILQ), 70–90 (WFFA…MYRS), and 102–122 (ALII…GFVV). Active-site residues include Asp123 and Asp141. Residues 137–157 (FNLADSAICIGAALIVLEGFL) form a helical membrane-spanning segment.

The protein belongs to the peptidase A8 family.

The protein resides in the cell inner membrane. The enzyme catalyses Release of signal peptides from bacterial membrane prolipoproteins. Hydrolyzes -Xaa-Yaa-Zaa-|-(S,diacylglyceryl)Cys-, in which Xaa is hydrophobic (preferably Leu), and Yaa (Ala or Ser) and Zaa (Gly or Ala) have small, neutral side chains.. The protein operates within protein modification; lipoprotein biosynthesis (signal peptide cleavage). This protein specifically catalyzes the removal of signal peptides from prolipoproteins. The chain is Lipoprotein signal peptidase from Citrobacter koseri (strain ATCC BAA-895 / CDC 4225-83 / SGSC4696).